The chain runs to 71 residues: R-phycoerythrin gamma-1 chain, chloroplastic (71 aa).

Residues cysteine 25 and cysteine 34 each contribute to the phycourobilin site. Cysteine 49 is a binding site for (2R,3E)-phycoerythrobilin. Cysteine 58 lines the phycourobilin pocket.

As to quaternary structure, heteromer of 6 alpha, 6 beta and 1 gamma chains. Post-translationally, contains four covalently linked bilin chromophores.

It localises to the plastid. Its subcellular location is the chloroplast thylakoid membrane. Functionally, critical for the incorporation of phycoerythrin in the phycobilisome complex. In Gastroclonium coulteri (Red alga), this protein is R-phycoerythrin gamma-1 chain, chloroplastic.